The sequence spans 704 residues: Elongation factor G (704 aa).

In terms of domain architecture, tr-type G spans 8–290; that stretch reads ARYRNIGISA…AVIEYLPAPT (283 aa). Residues 17–24, 88–92, and 142–145 contribute to the GTP site; these read AHIDAGKT, DTPGH, and NKMD.

This sequence belongs to the TRAFAC class translation factor GTPase superfamily. Classic translation factor GTPase family. EF-G/EF-2 subfamily.

It localises to the cytoplasm. Its function is as follows. Catalyzes the GTP-dependent ribosomal translocation step during translation elongation. During this step, the ribosome changes from the pre-translocational (PRE) to the post-translocational (POST) state as the newly formed A-site-bound peptidyl-tRNA and P-site-bound deacylated tRNA move to the P and E sites, respectively. Catalyzes the coordinated movement of the two tRNA molecules, the mRNA and conformational changes in the ribosome. The polypeptide is Elongation factor G (Proteus mirabilis (strain HI4320)).